An 880-amino-acid polypeptide reads, in one-letter code: Leucine--tRNA ligase (880 aa).

Residues 46 to 56 carry the 'HIGH' region motif; that stretch reads PYPSGALHMGH. Residues 638–642 carry the 'KMSKS' region motif; that stretch reads KMSKS. K641 provides a ligand contact to ATP.

This sequence belongs to the class-I aminoacyl-tRNA synthetase family.

It localises to the cytoplasm. The enzyme catalyses tRNA(Leu) + L-leucine + ATP = L-leucyl-tRNA(Leu) + AMP + diphosphate. The polypeptide is Leucine--tRNA ligase (Xanthomonas axonopodis pv. citri (strain 306)).